The sequence spans 299 residues: 4-diphosphocytidyl-2-C-methyl-D-erythritol kinase (299 aa).

K20 is a catalytic residue. 106-116 (PMGGGLGGGSS) provides a ligand contact to ATP. D148 is a catalytic residue.

The protein belongs to the GHMP kinase family. IspE subfamily. As to quaternary structure, homodimer.

It carries out the reaction 4-CDP-2-C-methyl-D-erythritol + ATP = 4-CDP-2-C-methyl-D-erythritol 2-phosphate + ADP + H(+). It functions in the pathway isoprenoid biosynthesis; isopentenyl diphosphate biosynthesis via DXP pathway; isopentenyl diphosphate from 1-deoxy-D-xylulose 5-phosphate: step 3/6. Functionally, catalyzes the phosphorylation of the position 2 hydroxy group of 4-diphosphocytidyl-2C-methyl-D-erythritol. The chain is 4-diphosphocytidyl-2-C-methyl-D-erythritol kinase from Yersinia pseudotuberculosis serotype O:1b (strain IP 31758).